Here is a 157-residue protein sequence, read N- to C-terminus: Large ribosomal subunit protein uL15 (157 aa).

A disordered region spans residues 1-40 (MKLHELSDNPGATKKRMRIGRGPGSGKGKMGGRGIKGQKS). Positions 21-35 (RGPGSGKGKMGGRGI) are enriched in gly residues.

Belongs to the universal ribosomal protein uL15 family. In terms of assembly, part of the 50S ribosomal subunit.

Functionally, binds to the 23S rRNA. This is Large ribosomal subunit protein uL15 from Ruegeria pomeroyi (strain ATCC 700808 / DSM 15171 / DSS-3) (Silicibacter pomeroyi).